The following is a 420-amino-acid chain: WD repeat-containing protein 21 (420 aa).

Residues 73 to 75 (RQF) carry the DDB-boX motif. 3 WD repeats span residues 251-289 (QSKGDVFSLKYLGDNLVIAGCRNKSVLVYDLRTKKECVQ), 293-332 (HGSSICSMQNLDFSQPKLLVSGLESKISLYDCRFLQSKKR), and 341-383 (GHSN…PFKE).

It is found in the cytoplasm. The protein localises to the nucleus. This chain is WD repeat-containing protein 21 (wdr21), found in Schizosaccharomyces pombe (strain 972 / ATCC 24843) (Fission yeast).